Consider the following 255-residue polypeptide: Hydroxyacylglutathione hydrolase (255 aa).

His-56, His-58, Asp-60, His-61, His-114, Asp-133, and His-171 together coordinate Zn(2+).

It belongs to the metallo-beta-lactamase superfamily. Glyoxalase II family. Monomer. Zn(2+) serves as cofactor.

It catalyses the reaction an S-(2-hydroxyacyl)glutathione + H2O = a 2-hydroxy carboxylate + glutathione + H(+). The protein operates within secondary metabolite metabolism; methylglyoxal degradation; (R)-lactate from methylglyoxal: step 2/2. Functionally, thiolesterase that catalyzes the hydrolysis of S-D-lactoyl-glutathione to form glutathione and D-lactic acid. In Bradyrhizobium diazoefficiens (strain JCM 10833 / BCRC 13528 / IAM 13628 / NBRC 14792 / USDA 110), this protein is Hydroxyacylglutathione hydrolase.